We begin with the raw amino-acid sequence, 160 residues long: ATP synthase subunit b, chloroplastic (160 aa).

The chain crosses the membrane as a helical span at residues 12–31; the sequence is NVINIAILVVILIRFARQVV.

This sequence belongs to the ATPase B chain family. F-type ATPases have 2 components, F(1) - the catalytic core - and F(0) - the membrane proton channel. F(1) has five subunits: alpha(3), beta(3), gamma(1), delta(1), epsilon(1). F(0) has four main subunits: a(1), b(1), b'(1) and c(10-14). The alpha and beta chains form an alternating ring which encloses part of the gamma chain. F(1) is attached to F(0) by a central stalk formed by the gamma and epsilon chains, while a peripheral stalk is formed by the delta, b and b' chains.

The protein resides in the plastid. Its subcellular location is the chloroplast thylakoid membrane. F(1)F(0) ATP synthase produces ATP from ADP in the presence of a proton or sodium gradient. F-type ATPases consist of two structural domains, F(1) containing the extramembraneous catalytic core and F(0) containing the membrane proton channel, linked together by a central stalk and a peripheral stalk. During catalysis, ATP synthesis in the catalytic domain of F(1) is coupled via a rotary mechanism of the central stalk subunits to proton translocation. Its function is as follows. Component of the F(0) channel, it forms part of the peripheral stalk, linking F(1) to F(0). The polypeptide is ATP synthase subunit b, chloroplastic (Cyanidioschyzon merolae (strain NIES-3377 / 10D) (Unicellular red alga)).